Here is a 93-residue protein sequence, read N- to C-terminus: Acylphosphatase (93 aa).

The region spanning 4–91 (TLHLVIHGRV…PAGTGFRVAA (88 aa)) is the Acylphosphatase-like domain. Active-site residues include R19 and N37.

The protein belongs to the acylphosphatase family.

The catalysed reaction is an acyl phosphate + H2O = a carboxylate + phosphate + H(+). In Azorhizobium caulinodans (strain ATCC 43989 / DSM 5975 / JCM 20966 / LMG 6465 / NBRC 14845 / NCIMB 13405 / ORS 571), this protein is Acylphosphatase (acyP).